A 442-amino-acid chain; its full sequence is F-box/FBD/LRR-repeat protein At2g26030 (442 aa).

Residues 3 to 49 form the F-box domain; that stretch reads CDRICELPDSLLTQVLSYLPTIDSVKTSVLSKRWEFLWLRVPVLDLK. LRR repeat units follow at residues 128–160, 162–187, 188–214, 234–260, 278–309, and 324–352; these read CNTL…HLED, WYYD…VLIR, PIDF…RLTF, YLNF…DIDS, KRDI…DRYS, and QAAV…ILDF. The FBD domain occupies 358–410; sequence PEQDGLTYVPQCLLSSLECVEIRELIMGEETGEKLVRYFLKNSVVLKKLILRL.

This chain is F-box/FBD/LRR-repeat protein At2g26030, found in Arabidopsis thaliana (Mouse-ear cress).